Consider the following 334-residue polypeptide: N-acetylmuramoyl-L-alanine amidase sle1 (334 aa).

An N-terminal signal peptide occupies residues 1 to 25; it reads MQKKVIAAIIGTSAISAVAATQANA. The LysM 1 domain maps to 27 to 70; it reads TTHTVKPGESVWAISNKYGISIAKLKSLNNLTSNLIFPNQVLKV. The segment covering 71 to 86 has biased composition (low complexity); sequence SGSSNSTSNSSRPSTN. A disordered region spans residues 71–90; that stretch reads SGSSNSTSNSSRPSTNSGGG. Positions 91-134 constitute a LysM 2 domain; sequence SYYTVQAGDSLSLIASKYGTTYQNIMRLNGLNNFFIYPGQKLKV. The segment at 137 to 156 is disordered; it reads TASSSNSTSNSSRPSTNSSG. The 44-residue stretch at 158–201 folds into the LysM 3 domain; the sequence is SYYTVQAGDSLSLIASKYGTTYQNIMRLNGLNNFFIYPGQKLKV. The region spanning 210–334 is the Peptidase C51 domain; sequence GSTTTTNRGY…YQVNNYRYIH (125 aa).

It is found in the secreted. It localises to the cell surface. The enzyme catalyses Hydrolyzes the link between N-acetylmuramoyl residues and L-amino acid residues in certain cell-wall glycopeptides.. Functionally, peptidoglycan hydrolase involved in the splitting of the septum during cell division. The polypeptide is N-acetylmuramoyl-L-alanine amidase sle1 (sle1) (Staphylococcus aureus (strain MRSA252)).